Consider the following 384-residue polypeptide: Ribosomal RNA large subunit methyltransferase G (384 aa).

This sequence belongs to the methyltransferase superfamily. RlmG family.

It localises to the cytoplasm. It catalyses the reaction guanosine(1835) in 23S rRNA + S-adenosyl-L-methionine = N(2)-methylguanosine(1835) in 23S rRNA + S-adenosyl-L-homocysteine + H(+). Its function is as follows. Specifically methylates the guanine in position 1835 (m2G1835) of 23S rRNA. This Pseudoalteromonas atlantica (strain T6c / ATCC BAA-1087) protein is Ribosomal RNA large subunit methyltransferase G.